Here is a 273-residue protein sequence, read N- to C-terminus: Serine acetyltransferase (273 aa).

Belongs to the transferase hexapeptide repeat family. Part of the cysteine synthase complex formed at a ratio of 1 copy of this protein and 2 copies of O-acetylserine sulfhydrylase (cysK). The complex reversibly dissociates in the presence of O-acetyl-L-serine in the absence of hydrogen sulfide.

The protein resides in the cytoplasm. The catalysed reaction is L-serine + acetyl-CoA = O-acetyl-L-serine + CoA. It functions in the pathway amino-acid biosynthesis; L-cysteine biosynthesis; L-cysteine from L-serine: step 1/2. Its activity is regulated as follows. Sensitive to feedback inhibition by L-cysteine. The chain is Serine acetyltransferase (cysE) from Salmonella typhimurium (strain LT2 / SGSC1412 / ATCC 700720).